The sequence spans 482 residues: Glutamate--tRNA ligase 2 (482 aa).

A 'HIGH' region motif is present at residues P8–G18. The 'KMSKS' region motif lies at K249–R253. K252 contacts ATP.

Belongs to the class-I aminoacyl-tRNA synthetase family. Glutamate--tRNA ligase type 1 subfamily. As to quaternary structure, monomer.

It localises to the cytoplasm. The enzyme catalyses tRNA(Glu) + L-glutamate + ATP = L-glutamyl-tRNA(Glu) + AMP + diphosphate. Functionally, catalyzes the attachment of glutamate to tRNA(Glu) in a two-step reaction: glutamate is first activated by ATP to form Glu-AMP and then transferred to the acceptor end of tRNA(Glu). This Caldicellulosiruptor saccharolyticus (strain ATCC 43494 / DSM 8903 / Tp8T 6331) protein is Glutamate--tRNA ligase 2.